Reading from the N-terminus, the 197-residue chain is Holliday junction branch migration complex subunit RuvA (197 aa).

The segment at 1–63 (MYAYLKGIIT…EDAHLLYGFR (63 aa)) is domain I. The tract at residues 64–142 (SEDEKKLFLS…VAGDGLPAKV (79 aa)) is domain II. A flexible linker region spans residues 143–147 (AVQAS). Positions 148-197 (AENQELEEAMEAMLALGYKATELKKIKKFFEGTTDTAENYIKSALKMLVK) are domain III.

It belongs to the RuvA family. Homotetramer. Forms an RuvA(8)-RuvB(12)-Holliday junction (HJ) complex. HJ DNA is sandwiched between 2 RuvA tetramers; dsDNA enters through RuvA and exits via RuvB. An RuvB hexamer assembles on each DNA strand where it exits the tetramer. Each RuvB hexamer is contacted by two RuvA subunits (via domain III) on 2 adjacent RuvB subunits; this complex drives branch migration. In the full resolvosome a probable DNA-RuvA(4)-RuvB(12)-RuvC(2) complex forms which resolves the HJ.

The protein localises to the cytoplasm. Functionally, the RuvA-RuvB-RuvC complex processes Holliday junction (HJ) DNA during genetic recombination and DNA repair, while the RuvA-RuvB complex plays an important role in the rescue of blocked DNA replication forks via replication fork reversal (RFR). RuvA specifically binds to HJ cruciform DNA, conferring on it an open structure. The RuvB hexamer acts as an ATP-dependent pump, pulling dsDNA into and through the RuvAB complex. HJ branch migration allows RuvC to scan DNA until it finds its consensus sequence, where it cleaves and resolves the cruciform DNA. The protein is Holliday junction branch migration complex subunit RuvA of Streptococcus pneumoniae serotype 2 (strain D39 / NCTC 7466).